Consider the following 119-residue polypeptide: Beta-2-microglobulin (119 aa).

Positions 1–20 (MVCSVVVALLALLSLSGLEA) are cleaved as a signal peptide. The 90-residue stretch at 25-114 (PKIQVYSRHP…VTFSTPKTVK (90 aa)) folds into the Ig-like C1-type domain. A disulfide bond links cysteine 45 and cysteine 100.

Belongs to the beta-2-microglobulin family. In terms of assembly, heterodimer of an alpha chain and a beta chain. Beta-2-microglobulin is the beta-chain of major histocompatibility complex class I molecules.

It is found in the secreted. Functionally, component of the class I major histocompatibility complex (MHC). Involved in the presentation of peptide antigens to the immune system. In Cebuella pygmaea (Pygmy marmoset), this protein is Beta-2-microglobulin (B2M).